A 2176-amino-acid polypeptide reads, in one-letter code: Nonribosomal peptide synthetase sirP (2176 aa).

The span at 16–31 (EGLTGDDHSPESRRDF) shows a compositional bias: basic and acidic residues. The segment at 16–38 (EGLTGDDHSPESRRDFPMSQSSG) is disordered. The segment at 51-434 (FERIASQFPE…LGRKDRVVKN (384 aa)) is adenylation 1. The Carrier 1 domain maps to 534–610 (SSPSSNLYVV…RICDTLSATI (77 aa)). S571 bears the O-(pantetheine 4'-phosphoryl)serine mark. Residues 643–1073 (YMTAIQVNMI…MMNQLEINDL (431 aa)) form a condensation 1 region. The tract at residues 1094–1474 (FEEVVDTWPD…GRIDNQVKVR (381 aa)) is adenylation 2. One can recognise a Carrier 2 domain in the interval 1570-1646 (PIEGTTERII…DLALAIDKHI (77 aa)). The residue at position 1606 (S1606) is an O-(pantetheine 4'-phosphoryl)serine. A condensation 2 region spans residues 1661 to 2070 (QNTVLSHLEE…VQLMAAFRYL (410 aa)). The Carrier 3 domain maps to 2106–2176 (QEMIDLVREA…TAELIAGAVE (71 aa)). S2140 is subject to O-(pantetheine 4'-phosphoryl)serine.

The protein belongs to the NRP synthetase family.

The protein operates within mycotoxin biosynthesis. Functionally, nonribosomal peptide synthetase; part of the gene cluster that mediates the biosynthesis of sirodesmin PL, an epipolythiodioxopiperazine (ETP) characterized by a disulfide bridged cyclic dipeptide and that acts as a phytotoxin which is involved in the blackleg didease of canola. SirD catalyzes the O-prenylation of L-tyrosine (L-Tyr) in the presence of dimethylallyl diphosphate (DMAPP) to yield 4-O-dimethylallyl-L-Tyr, and therefore represents probably the first pathway-specific enzyme in the biosynthesis of sirodesmin PL. 4-O-dimethylallyl-L-Tyr, then undergoes condensation with L-Ser in a reaction catalyzed by the non-ribosomal peptide synthase sirP to form the diketopiperazine (DKP) backbone. Further bishydroxylation of the DKP performed by the cytochrome P450 monooxygenase sirC leads to the production of the intermediate phomamide. This step is essential to form the reactive thiol group required for toxicity of sirodesmin PL. The next steps of sirodesmin biosynthesis are not well understood yet, but some predictions could be made from intermediate compounds identification. Phomamide is converted into phomalizarine via oxidation, probably by sirT. Further oxidation, methylation (by sirM or sirN) and reduction steps convert phomalizarine to deacetyl sirodesmin. Finally, acetyltransferase sirH probably acetylates deacetyl sirodesmin to produce sirodesmin PL. The chain is Nonribosomal peptide synthetase sirP from Leptosphaeria maculans (Blackleg fungus).